The following is a 148-amino-acid chain: UPF0260 protein KPN78578_22800 (148 aa).

This sequence belongs to the UPF0260 family.

This chain is UPF0260 protein KPN78578_22800, found in Klebsiella pneumoniae subsp. pneumoniae (strain ATCC 700721 / MGH 78578).